We begin with the raw amino-acid sequence, 459 residues long: uncharacterized protein (459 aa).

Lys-285 carries the N6-(pyridoxal phosphate)lysine modification.

Belongs to the class-III pyridoxal-phosphate-dependent aminotransferase family.

The protein localises to the cytoplasm. This is an uncharacterized protein from Schizosaccharomyces pombe (strain 972 / ATCC 24843) (Fission yeast).